The sequence spans 197 residues: Small ribosomal subunit protein uS4B (197 aa).

The 66-residue stretch at 88-153 folds into the S4 RNA-binding domain; it reads CRLDNMVYRM…IEKYLSNLKN (66 aa).

This sequence belongs to the universal ribosomal protein uS4 family. Part of the 30S ribosomal subunit. Contacts protein S5. The interaction surface between S4 and S5 is involved in control of translational fidelity.

In terms of biological role, one of the primary rRNA binding proteins, it binds directly to 16S rRNA where it nucleates assembly of the body of the 30S subunit. Functionally, with S5 and S12 plays an important role in translational accuracy. This chain is Small ribosomal subunit protein uS4B, found in Alkaliphilus oremlandii (strain OhILAs) (Clostridium oremlandii (strain OhILAs)).